The chain runs to 149 residues: Large ribosomal subunit protein uL13 (149 aa).

It belongs to the universal ribosomal protein uL13 family. As to quaternary structure, part of the 50S ribosomal subunit.

Its function is as follows. This protein is one of the early assembly proteins of the 50S ribosomal subunit, although it is not seen to bind rRNA by itself. It is important during the early stages of 50S assembly. The chain is Large ribosomal subunit protein uL13 from Borrelia duttonii (strain Ly).